A 324-amino-acid polypeptide reads, in one-letter code: Phospho-N-acetylmuramoyl-pentapeptide-transferase (324 aa).

10 helical membrane-spanning segments follow: residues 5–25, 52–72, 77–97, 122–142, 149–169, 176–196, 201–221, 227–247, 253–273, and 302–322; these read GLLV…PLFI, PTMG…IMAI, LGAE…IGFL, VIAI…YIMI, FELG…GSNA, LDGL…IIAV, FGVA…LVFN, VFMG…VAIL, LLVI…IQVI, and VVVT…YIGV.

Belongs to the glycosyltransferase 4 family. MraY subfamily. Mg(2+) is required as a cofactor.

The protein localises to the cell membrane. It carries out the reaction UDP-N-acetyl-alpha-D-muramoyl-L-alanyl-gamma-D-glutamyl-meso-2,6-diaminopimeloyl-D-alanyl-D-alanine + di-trans,octa-cis-undecaprenyl phosphate = di-trans,octa-cis-undecaprenyl diphospho-N-acetyl-alpha-D-muramoyl-L-alanyl-D-glutamyl-meso-2,6-diaminopimeloyl-D-alanyl-D-alanine + UMP. The protein operates within cell wall biogenesis; peptidoglycan biosynthesis. Its function is as follows. Catalyzes the initial step of the lipid cycle reactions in the biosynthesis of the cell wall peptidoglycan: transfers peptidoglycan precursor phospho-MurNAc-pentapeptide from UDP-MurNAc-pentapeptide onto the lipid carrier undecaprenyl phosphate, yielding undecaprenyl-pyrophosphoryl-MurNAc-pentapeptide, known as lipid I. The protein is Phospho-N-acetylmuramoyl-pentapeptide-transferase of Bacillus anthracis.